We begin with the raw amino-acid sequence, 1489 residues long: Chromatin-remodeling ATPase INO80 (1489 aa).

3 positions are modified to phosphoserine: Ser65, Ser115, and Ser133. Disordered stretches follow at residues 137–311 (NEKD…KLSM) and 393–452 (KRER…GLPT). Acidic residues-rich tracts occupy residues 140-164 (DADEDEEDDEDELEDGEEDMEEDEA) and 214-291 (DENE…DFNP). Residues 301–311 (SSSSSSTKLSM) are compositionally biased toward low complexity. Residues 393 to 402 (KREREREEAL) show a composition bias toward basic and acidic residues. A DBINO domain is found at 476 to 601 (IWKDMARKDS…SHFIGRKIKT (126 aa)). The residue at position 610 (Ser610) is a Phosphoserine. One can recognise a Helicase ATP-binding domain in the interval 718–890 (ANLYDQGING…WALLHFIMPS (173 aa)). Residue 731-738 (DEMGLGKT) participates in ATP binding. Positions 841–844 (DEAQ) match the DEAQ box motif. The 165-residue stretch at 1303 to 1467 (KLDELLVKLK…TIEVGENDSE (165 aa)) folds into the Helicase C-terminal domain. Residues 1456–1489 (IKTIEVGENDSEVTREGSKSISQDGIKEAASALA) form a disordered region.

It belongs to the SNF2/RAD54 helicase family. As to quaternary structure, component of the chromatin-remodeling INO80 complex, at least composed of ARP4, ARP5, ARP8, RVB1, RVB2, TAF14, NHP10, IES1, IES3, IES4, IES6, ACT1, IES2, IES5 and INO80.

Its subcellular location is the nucleus. The catalysed reaction is ATP + H2O = ADP + phosphate + H(+). Functionally, ATPase component of the INO80 complex which remodels chromatin by shifting nucleosomes and is involved in DNA repair. Its ability to induce transcription of some phosphate-responsive genes is modulated by inositol polyphosphates. The INO80 complex is involved in DNA repair by associating with 'Ser-129' phosphorylated H2A histones as a response to DNA damage. The polypeptide is Chromatin-remodeling ATPase INO80 (INO80) (Saccharomyces cerevisiae (strain ATCC 204508 / S288c) (Baker's yeast)).